A 548-amino-acid chain; its full sequence is Chaperonin GroEL (548 aa).

ATP-binding positions include 30–33 (TLGP), Lys51, 87–91 (DGTTT), Gly415, and Asp496.

This sequence belongs to the chaperonin (HSP60) family. Forms a cylinder of 14 subunits composed of two heptameric rings stacked back-to-back. Interacts with the co-chaperonin GroES.

It is found in the cytoplasm. The enzyme catalyses ATP + H2O + a folded polypeptide = ADP + phosphate + an unfolded polypeptide.. Together with its co-chaperonin GroES, plays an essential role in assisting protein folding. The GroEL-GroES system forms a nano-cage that allows encapsulation of the non-native substrate proteins and provides a physical environment optimized to promote and accelerate protein folding. In Haemophilus influenzae (strain PittGG), this protein is Chaperonin GroEL.